The chain runs to 100 residues: UPF0298 protein lp_2135 (100 aa).

Belongs to the UPF0298 family.

It localises to the cytoplasm. The chain is UPF0298 protein lp_2135 from Lactiplantibacillus plantarum (strain ATCC BAA-793 / NCIMB 8826 / WCFS1) (Lactobacillus plantarum).